Reading from the N-terminus, the 969-residue chain is RNA polymerase-associated protein RapA (969 aa).

The 171-residue stretch at 164–334 (EVGRRHAPRV…FARLRLLDPD (171 aa)) folds into the Helicase ATP-binding domain. 177–184 (DEVGLGKT) is a binding site for ATP. A DEAH box motif is present at residues 280–283 (DEAH). The region spanning 492–679 (RVNWLIEKIQ…ESAKLNQSLK (188 aa)) is the Helicase C-terminal domain.

The protein belongs to the SNF2/RAD54 helicase family. RapA subfamily. In terms of assembly, interacts with the RNAP. Has a higher affinity for the core RNAP than for the holoenzyme. Its ATPase activity is stimulated by binding to RNAP.

Functionally, transcription regulator that activates transcription by stimulating RNA polymerase (RNAP) recycling in case of stress conditions such as supercoiled DNA or high salt concentrations. Probably acts by releasing the RNAP, when it is trapped or immobilized on tightly supercoiled DNA. Does not activate transcription on linear DNA. Probably not involved in DNA repair. This Vibrio atlanticus (strain LGP32) (Vibrio splendidus (strain Mel32)) protein is RNA polymerase-associated protein RapA.